The primary structure comprises 355 residues: 3'-5' exonuclease (355 aa).

The segment at 1–121 (MDKYLIKLPN…PSPEKEKPEK (121 aa)) is disordered. 3 stretches are compositionally biased toward basic and acidic residues: residues 17 to 29 (VSDKKEVVKKETP), 36 to 50 (AKKDTPKQEKEKENT), and 72 to 92 (KNLDTPEVTQEKESVESENPP). 2 positions are modified to phosphoserine: S105 and S113. A 3'-5' exonuclease domain is found at 147 to 315 (VMQWVEKQKE…GQVIYRDLEQ (169 aa)). Residues D164, E166, and D302 each contribute to the Mg(2+) site.

This sequence belongs to the WRNexo family.

The protein resides in the nucleus. Its function is as follows. Has exonuclease activity on both single-stranded and duplex templates bearing overhangs, but not blunt ended duplex DNA, and cleaves in a 3'-5' direction. Essential for the formation of DNA replication focal centers. Has an important role in maintaining genome stability. In Drosophila ananassae (Fruit fly), this protein is 3'-5' exonuclease.